The chain runs to 166 residues: Putative methyltransferase Rv1506c (166 aa).

Belongs to the methyltransferase superfamily.

In terms of biological role, probably plays a role in host phagosome maturation arrest, as well as a role in the synthesis of acyltrehalose-containing glycolipids. This is Putative methyltransferase Rv1506c from Mycobacterium tuberculosis (strain ATCC 25618 / H37Rv).